The chain runs to 493 residues: Protein nucleotidyltransferase YdiU (493 aa).

Residues Gly-96, Gly-98, Arg-99, Lys-119, Asp-131, Gly-132, Arg-182, and Arg-189 each coordinate ATP. Catalysis depends on Asp-258, which acts as the Proton acceptor. Residues Asn-259 and Asp-268 each coordinate Mg(2+). Asp-268 provides a ligand contact to ATP. Positions 471-493 (EKYTEFKNPPAPKERVSQTFCGT) are disordered.

This sequence belongs to the SELO family. Requires Mg(2+) as cofactor. Mn(2+) is required as a cofactor.

The enzyme catalyses L-seryl-[protein] + ATP = 3-O-(5'-adenylyl)-L-seryl-[protein] + diphosphate. It carries out the reaction L-threonyl-[protein] + ATP = 3-O-(5'-adenylyl)-L-threonyl-[protein] + diphosphate. The catalysed reaction is L-tyrosyl-[protein] + ATP = O-(5'-adenylyl)-L-tyrosyl-[protein] + diphosphate. It catalyses the reaction L-histidyl-[protein] + UTP = N(tele)-(5'-uridylyl)-L-histidyl-[protein] + diphosphate. The enzyme catalyses L-seryl-[protein] + UTP = O-(5'-uridylyl)-L-seryl-[protein] + diphosphate. It carries out the reaction L-tyrosyl-[protein] + UTP = O-(5'-uridylyl)-L-tyrosyl-[protein] + diphosphate. Nucleotidyltransferase involved in the post-translational modification of proteins. It can catalyze the addition of adenosine monophosphate (AMP) or uridine monophosphate (UMP) to a protein, resulting in modifications known as AMPylation and UMPylation. This is Protein nucleotidyltransferase YdiU from Nitrosococcus oceani (strain ATCC 19707 / BCRC 17464 / JCM 30415 / NCIMB 11848 / C-107).